The chain runs to 252 residues: Centromere protein V (252 aa).

The segment at 1 to 80 (MRRTRSAVAT…EEPPPAVTPA (80 aa)) is disordered. Ser18 is subject to Phosphoserine. Residue Arg39 is modified to Omega-N-methylarginine. Residues 54–64 (SAKPRPKPPPR) are compositionally biased toward pro residues. The residue at position 78 (Thr78) is a Phosphothreonine. The region spanning 125–237 (HTGGCHCGAV…TEEFNGSDWE (113 aa)) is the CENP-V/GFA domain. Zn(2+)-binding residues include Cys129, Cys131, Cys149, Cys151, Cys154, Cys193, and Cys196. Ser234 is subject to Phosphoserine.

It belongs to the Gfa family. The cofactor is Zn(2+).

The protein localises to the chromosome. It localises to the centromere. It is found in the kinetochore. The protein resides in the nucleus. Its subcellular location is the cytoplasm. The protein localises to the cytoskeleton. It localises to the spindle. In terms of biological role, required for distribution of pericentromeric heterochromatin in interphase nuclei and for centromere formation and organization, chromosome alignment and cytokinesis. This is Centromere protein V (Cenpv) from Mus musculus (Mouse).